Here is a 322-residue protein sequence, read N- to C-terminus: Cytochrome f (322 aa).

Positions 1 to 35 (MQNRNIFSWVKEQTTRSISVSIMILIYVITWTSIS) are cleaved as a signal peptide. Residues tyrosine 38, cysteine 58, cysteine 61, and histidine 62 each contribute to the heme site. The helical transmembrane segment at 288–308 (VQGLFFFFASVILAQIFLVLK) threads the bilayer.

The protein belongs to the cytochrome f family. The 4 large subunits of the cytochrome b6-f complex are cytochrome b6, subunit IV (17 kDa polypeptide, petD), cytochrome f and the Rieske protein, while the 4 small subunits are PetG, PetL, PetM and PetN. The complex functions as a dimer. The cofactor is heme.

It localises to the plastid. The protein localises to the chloroplast thylakoid membrane. Component of the cytochrome b6-f complex, which mediates electron transfer between photosystem II (PSII) and photosystem I (PSI), cyclic electron flow around PSI, and state transitions. This chain is Cytochrome f, found in Nandina domestica (Heavenly bamboo).